The chain runs to 495 residues: Neuronal acetylcholine receptor subunit beta-4 (495 aa).

Positions 1–20 are cleaved as a signal peptide; the sequence is MRGTPLLLVSLFSLLQDGDC. Over 21-235 the chain is Extracellular; sequence RLANAEEKLM…IIKRKPLFYT (215 aa). Residues Asn-35, Asn-92, Asn-137, and Asn-165 are each glycosylated (N-linked (GlcNAc...) asparagine). Residues Cys-152 and Cys-166 are joined by a disulfide bond. The helical transmembrane segment at 236 to 256 threads the bilayer; sequence INLIIPCVLITSLAILVFYLP. Residues 257 to 264 lie on the Cytoplasmic side of the membrane; that stretch reads SDCGEKMT. Residue Glu-261 participates in Na(+) binding. A helical membrane pass occupies residues 265 to 285; sequence LCISVLLALTFFLLLISKIVP. Residues 286–297 are Extracellular-facing; the sequence is PTSLDIPLIGKY. A helical membrane pass occupies residues 298-318; sequence LLFTMVLVTFSIVTTVCVLNV. Topologically, residues 319–463 are cytoplasmic; sequence HHRSPSTHTM…WKFVAMVVDR (145 aa). The chain crosses the membrane as a helical span at residues 464-484; that stretch reads LFLWVFVFVCILGTMGLFLPP. The Extracellular portion of the chain corresponds to 485–495; sequence LFQIHAPSKDS.

Belongs to the ligand-gated ion channel (TC 1.A.9) family. Acetylcholine receptor (TC 1.A.9.1) subfamily. Beta-4/CHRNB4 sub-subfamily. In terms of assembly, neuronal AChR is composed of two different types of subunits: alpha and beta. CHRNB4/Beta-4 subunit can be combined to CHRNA2/alpha-2, CHRNA3/alpha-3 or CHRNA4/alpha-4, CHRNA5/alpha-5 and CHRNB3/beta-3 to give rise to functional receptors. Forms stoichiometries such as (CHRNA3)2:(CHRNB4)3 or (CHRNA3:CHRNB4)2:CHRNB3. Interacts with RIC3; which is required for proper folding and assembly. Interacts with LYPD6. As to expression, in the brain, it is detected in the medial habenula. In the peripheral nervous system, it is found at least in the adrenal gland.

The protein resides in the synaptic cell membrane. The protein localises to the cell membrane. It catalyses the reaction Ca(2+)(in) = Ca(2+)(out). The enzyme catalyses K(+)(in) = K(+)(out). The catalysed reaction is Na(+)(in) = Na(+)(out). Activated by a myriad of ligands such as acetylcholine, cytisine, nicotine, choline and epibatidine. nAChR activity is inhibited by the antagonist alpha-conotoxins BuIA and MII, small disulfide-constrained peptides from cone snails. The heteropentamer CHRNA3:CHRNB4 activity is blocked by the alpha-conotoxin ImI and AuIB. Functionally, component of neuronal acetylcholine receptors (nAChRs) that function as pentameric, ligand-gated cation channels with high calcium permeability among other activities. nAChRs are excitatory neurotrasnmitter receptors formed by a collection of nAChR subunits known to mediate synaptic transmission in the nervous system and the neuromuscular junction. Each nAchR subunit confers differential attributes to channel properties, including activation, deactivation and desensitization kinetics, pH sensitivity, cation permeability, and binding to allosteric modulators. CHRNB4 forms heteropentameric neuronal acetylcholine receptors with CHRNA2, CHRNA3 and CHRNA4, as well as CHRNA5 and CHRNB3 as accesory subunits. CHRNA3:CHRNB4 being predominant in neurons of the autonomic ganglia, it is known as ganglionic nicotinic receptor. CHRNA3:CHRNB4 or CHRNA3:CHRNA5:CHRNB4 play also an important role in the habenulo-interpeduncular tract, modulating the mesolimbic dopamine system and affecting reward circuits and addiction. Hypothalamic CHRNA3:CHRNB4 nAChR activation by nicotine leads to activation of POMC neurons and a decrease in food intake. This chain is Neuronal acetylcholine receptor subunit beta-4 (Chrnb4), found in Rattus norvegicus (Rat).